The sequence spans 310 residues: HTH-type transcriptional activator TtdR (310 aa).

An HTH lysR-type domain is found at 6 to 63 (PLAKDLQVLVEIVHSGSFSAAAATLGQTPAFVTKRIQILENTLATTLLNRSARGVALT). A DNA-binding region (H-T-H motif) is located at residues 23 to 42 (FSAAAATLGQTPAFVTKRIQ).

The protein belongs to the LysR transcriptional regulatory family.

In terms of biological role, positive regulator required for L-tartrate-dependent anaerobic growth on glycerol. Induces expression of the ttdA-ttdB-ygjE operon. The protein is HTH-type transcriptional activator TtdR (ttdR) of Escherichia coli O6:H1 (strain CFT073 / ATCC 700928 / UPEC).